The following is a 185-amino-acid chain: Ribosome-recycling factor (185 aa).

Belongs to the RRF family.

It localises to the cytoplasm. Functionally, responsible for the release of ribosomes from messenger RNA at the termination of protein biosynthesis. May increase the efficiency of translation by recycling ribosomes from one round of translation to another. The sequence is that of Ribosome-recycling factor from Shewanella frigidimarina (strain NCIMB 400).